A 354-amino-acid polypeptide reads, in one-letter code: Pyrimidine monooxygenase RutA (354 aa).

FMN-binding positions include 49-50, Asn115, Glu124, 140-141, and Ser189; these read IK and RY.

Belongs to the NtaA/SnaA/DszA monooxygenase family. RutA subfamily.

It carries out the reaction uracil + FMNH2 + NADH + O2 = (Z)-3-ureidoacrylate + FMN + NAD(+) + H2O + H(+). The catalysed reaction is thymine + FMNH2 + NADH + O2 = (Z)-2-methylureidoacrylate + FMN + NAD(+) + H2O + H(+). Functionally, catalyzes the pyrimidine ring opening between N-3 and C-4 by an unusual flavin hydroperoxide-catalyzed mechanism, adding oxygen atoms in the process to yield ureidoacrylate peracid, that immediately reacts with FMN forming ureidoacrylate and FMN-N(5)-oxide. The FMN-N(5)-oxide reacts spontaneously with NADH to produce FMN. Requires the flavin reductase RutF to regenerate FMN in vivo. This Caulobacter sp. (strain K31) protein is Pyrimidine monooxygenase RutA.